The primary structure comprises 351 residues: Photosystem II D2 protein (351 aa).

Residues 39 to 59 traverse the membrane as a helical segment; it reads CAFLALGGWLTGTTFVTSWYT. A chlorophyll a-binding site is contributed by histidine 116. Residues 123-139 form a helical membrane-spanning segment; it reads GFMLRQFEIARLVGIRP. Pheophytin a-binding residues include glutamine 128 and asparagine 141. The chain crosses the membrane as a helical span at residues 151 to 164; that stretch reads VFVSVFLMYPLGQS. Histidine 196 serves as a coordination point for chlorophyll a. A helical transmembrane segment spans residues 206 to 226; sequence GALLCAIHGATVENTLFEDGE. Residues histidine 213 and phenylalanine 260 each contribute to the a plastoquinone site. Residue histidine 213 participates in Fe cation binding. Histidine 267 is a binding site for Fe cation. A helical transmembrane segment spans residues 277–293; that stretch reads GLWMSAVGIVGLALNLR.

The protein belongs to the reaction center PufL/M/PsbA/D family. PSII is composed of 1 copy each of membrane proteins PsbA, PsbB, PsbC, PsbD, PsbE, PsbF, PsbH, PsbI, PsbJ, PsbK, PsbL, PsbM, PsbT, PsbX, PsbY, PsbZ, Psb30/Ycf12, peripheral proteins PsbO, CyanoQ (PsbQ), PsbU, PsbV and a large number of cofactors. It forms dimeric complexes. The cofactor is The D1/D2 heterodimer binds P680, chlorophylls that are the primary electron donor of PSII, and subsequent electron acceptors. It shares a non-heme iron and each subunit binds pheophytin, quinone, additional chlorophylls, carotenoids and lipids. There is also a Cl(-1) ion associated with D1 and D2, which is required for oxygen evolution. The PSII complex binds additional chlorophylls, carotenoids and specific lipids..

The protein localises to the cellular thylakoid membrane. It catalyses the reaction 2 a plastoquinone + 4 hnu + 2 H2O = 2 a plastoquinol + O2. Its function is as follows. Photosystem II (PSII) is a light-driven water:plastoquinone oxidoreductase that uses light energy to abstract electrons from H(2)O, generating O(2) and a proton gradient subsequently used for ATP formation. It consists of a core antenna complex that captures photons, and an electron transfer chain that converts photonic excitation into a charge separation. The D1/D2 (PsbA/PsbD) reaction center heterodimer binds P680, the primary electron donor of PSII as well as several subsequent electron acceptors. D2 is needed for assembly of a stable PSII complex. The chain is Photosystem II D2 protein from Trichormus variabilis (strain ATCC 29413 / PCC 7937) (Anabaena variabilis).